The following is a 217-amino-acid chain: Ribosomal RNA small subunit methyltransferase G (217 aa).

S-adenosyl-L-methionine is bound by residues Gly-85, Leu-90, 135-136, and Arg-149; that span reads IE.

This sequence belongs to the methyltransferase superfamily. RNA methyltransferase RsmG family.

The protein localises to the cytoplasm. It carries out the reaction guanosine(527) in 16S rRNA + S-adenosyl-L-methionine = N(7)-methylguanosine(527) in 16S rRNA + S-adenosyl-L-homocysteine. Specifically methylates the N7 position of guanine in position 527 of 16S rRNA. The protein is Ribosomal RNA small subunit methyltransferase G of Acidiphilium cryptum (strain JF-5).